The following is a 389-amino-acid chain: Pre-mRNA-splicing factor PRP46 (389 aa).

7 WD repeats span residues 83 to 123 (AHQG…LKAV), 126 to 165 (GHVLGIRSLCISKRHPYLFSGGEDKSLRCWDLERSNSDAG), 173 to 212 (GHLGGVYSIGLHPELDVLFSGGKDCVVRVWDIRSRVEAMT), 215 to 254 (GHTNDITSIETDYNDPQVITSSMDGTIRLWDLRKSKTELL), 257 to 298 (NHSK…NEFG), 308 to 347 (DNSRIINTLAINPVTNTLFSGYDDGKLEFYNYTTGNLQQS), and 356 to 389 (PEQSAIYASTFDMSGLRLLTCHGDKSIRIWGTSY).

The protein belongs to the WD repeat PRL1/PRL2 family. In terms of assembly, associated with the spliceosome.

Its subcellular location is the cytoplasm. The protein localises to the nucleus. Functionally, involved in pre-mRNA splicing and required for cell cycle progression at G2/M. This is Pre-mRNA-splicing factor PRP46 (PRP46) from Candida albicans (strain SC5314 / ATCC MYA-2876) (Yeast).